A 545-amino-acid chain; its full sequence is T-box transcription factor TBX4 (545 aa).

Positions 71-251 form a DNA-binding region, T-box; it reads LHEKELWKKF…NNPFAKGFRG (181 aa). The disordered stretch occupies residues 479-509; that stretch reads QSQVRERGPSASFPRERGLPQGCERKPPSPH. The segment covering 482–505 has biased composition (basic and acidic residues); sequence VRERGPSASFPRERGLPQGCERKP. Residue serine 507 is modified to Phosphoserine.

It is found in the nucleus. In terms of biological role, transcriptional regulator that has an essential role in the organogenesis of lungs, pelvis, and hindlimbs. The sequence is that of T-box transcription factor TBX4 (TBX4) from Homo sapiens (Human).